Consider the following 479-residue polypeptide: Cysteine--tRNA ligase (479 aa).

C28 serves as a coordination point for Zn(2+). The short motif at 30-40 is the 'HIGH' region element; the sequence is PTVYDHAHLGH. Residues C207, H232, and E236 each contribute to the Zn(2+) site. Positions 264–268 match the 'KMSKS' region motif; sequence KMSKS. K267 provides a ligand contact to ATP.

It belongs to the class-I aminoacyl-tRNA synthetase family. It depends on Zn(2+) as a cofactor.

The protein resides in the cytoplasm. The enzyme catalyses tRNA(Cys) + L-cysteine + ATP = L-cysteinyl-tRNA(Cys) + AMP + diphosphate. The polypeptide is Cysteine--tRNA ligase (Methanococcus aeolicus (strain ATCC BAA-1280 / DSM 17508 / OCM 812 / Nankai-3)).